A 61-amino-acid chain; its full sequence is Photosystem II reaction center protein K (61 aa).

Residues 1–24 (MLNIFSLICICLNSALYSSSLFFA) constitute a propeptide that is removed on maturation. Residues 40–60 (MPVIPLFFFLLAFVWQAAVSF) traverse the membrane as a helical segment.

It belongs to the PsbK family. As to quaternary structure, PSII is composed of 1 copy each of membrane proteins PsbA, PsbB, PsbC, PsbD, PsbE, PsbF, PsbH, PsbI, PsbJ, PsbK, PsbL, PsbM, PsbT, PsbX, PsbY, PsbZ, Psb30/Ycf12, at least 3 peripheral proteins of the oxygen-evolving complex and a large number of cofactors. It forms dimeric complexes.

The protein localises to the plastid. The protein resides in the chloroplast thylakoid membrane. Its function is as follows. One of the components of the core complex of photosystem II (PSII). PSII is a light-driven water:plastoquinone oxidoreductase that uses light energy to abstract electrons from H(2)O, generating O(2) and a proton gradient subsequently used for ATP formation. It consists of a core antenna complex that captures photons, and an electron transfer chain that converts photonic excitation into a charge separation. This is Photosystem II reaction center protein K from Panax ginseng (Korean ginseng).